A 782-amino-acid polypeptide reads, in one-letter code: LPS-assembly protein LptD (782 aa).

Residues 1-23 (MNKKHTLISLAILTALYSQQSLA) form the signal peptide.

The protein belongs to the LptD family. As to quaternary structure, component of the lipopolysaccharide transport and assembly complex. Interacts with LptE and LptA.

The protein localises to the cell outer membrane. In terms of biological role, together with LptE, is involved in the assembly of lipopolysaccharide (LPS) at the surface of the outer membrane. This Haemophilus influenzae (strain ATCC 51907 / DSM 11121 / KW20 / Rd) protein is LPS-assembly protein LptD.